Here is a 269-residue protein sequence, read N- to C-terminus: Formamidopyrimidine-DNA glycosylase (269 aa).

Proline 2 (schiff-base intermediate with DNA) is an active-site residue. Catalysis depends on glutamate 3, which acts as the Proton donor. Catalysis depends on lysine 57, which acts as the Proton donor; for beta-elimination activity. Histidine 90, arginine 109, and lysine 150 together coordinate DNA. Residues 235–269 form an FPG-type zinc finger; that stretch reads QVYGRAGEPCRACGTPIESAKHGQRSTFFCPRCQR. Catalysis depends on arginine 259, which acts as the Proton donor; for delta-elimination activity.

The protein belongs to the FPG family. Monomer. It depends on Zn(2+) as a cofactor.

The enzyme catalyses Hydrolysis of DNA containing ring-opened 7-methylguanine residues, releasing 2,6-diamino-4-hydroxy-5-(N-methyl)formamidopyrimidine.. The catalysed reaction is 2'-deoxyribonucleotide-(2'-deoxyribose 5'-phosphate)-2'-deoxyribonucleotide-DNA = a 3'-end 2'-deoxyribonucleotide-(2,3-dehydro-2,3-deoxyribose 5'-phosphate)-DNA + a 5'-end 5'-phospho-2'-deoxyribonucleoside-DNA + H(+). In terms of biological role, involved in base excision repair of DNA damaged by oxidation or by mutagenic agents. Acts as a DNA glycosylase that recognizes and removes damaged bases. Has a preference for oxidized purines, such as 7,8-dihydro-8-oxoguanine (8-oxoG). Has AP (apurinic/apyrimidinic) lyase activity and introduces nicks in the DNA strand. Cleaves the DNA backbone by beta-delta elimination to generate a single-strand break at the site of the removed base with both 3'- and 5'-phosphates. The protein is Formamidopyrimidine-DNA glycosylase of Serratia proteamaculans (strain 568).